An 80-amino-acid chain; its full sequence is Acyl carrier protein (80 aa).

The Carrier domain maps to 4-79 (EAILEKVRSI…DAVKYIEEKQ (76 aa)). O-(pantetheine 4'-phosphoryl)serine is present on Ser-39.

Belongs to the acyl carrier protein (ACP) family. In terms of processing, 4'-phosphopantetheine is transferred from CoA to a specific serine of apo-ACP by AcpS. This modification is essential for activity because fatty acids are bound in thioester linkage to the sulfhydryl of the prosthetic group.

It is found in the cytoplasm. It functions in the pathway lipid metabolism; fatty acid biosynthesis. Functionally, carrier of the growing fatty acid chain in fatty acid biosynthesis. This chain is Acyl carrier protein, found in Prochlorococcus marinus (strain NATL1A).